Here is a 292-residue protein sequence, read N- to C-terminus: uncharacterized protein (292 aa).

A helical membrane pass occupies residues 66–86 (LFFYLLFWWTYLTIVVLLTVP).

Its subcellular location is the host membrane. This is an uncharacterized protein from Alcelaphine herpesvirus 1 (strain C500) (AlHV-1).